The chain runs to 139 residues: Ribonuclease P protein component (139 aa).

A disordered region spans residues 120 to 139; the sequence is KATTGGECTPKSEKCVTAPR.

Belongs to the RnpA family. As to quaternary structure, consists of a catalytic RNA component (M1 or rnpB) and a protein subunit.

It catalyses the reaction Endonucleolytic cleavage of RNA, removing 5'-extranucleotides from tRNA precursor.. RNaseP catalyzes the removal of the 5'-leader sequence from pre-tRNA to produce the mature 5'-terminus. It can also cleave other RNA substrates such as 4.5S RNA. The protein component plays an auxiliary but essential role in vivo by binding to the 5'-leader sequence and broadening the substrate specificity of the ribozyme. This Chlamydia pneumoniae (Chlamydophila pneumoniae) protein is Ribonuclease P protein component.